The primary structure comprises 437 residues: 3-phosphoshikimate 1-carboxyvinyltransferase (437 aa).

Residues lysine 26, serine 27, and arginine 31 each coordinate 3-phosphoshikimate. Lysine 26 serves as a coordination point for phosphoenolpyruvate. Positions 99 and 127 each coordinate phosphoenolpyruvate. 3-phosphoshikimate contacts are provided by serine 172, glutamine 174, aspartate 320, and lysine 347. Glutamine 174 is a phosphoenolpyruvate binding site. Catalysis depends on aspartate 320, which acts as the Proton acceptor. Residues arginine 351 and arginine 392 each contribute to the phosphoenolpyruvate site.

Belongs to the EPSP synthase family. Monomer.

The protein localises to the cytoplasm. The catalysed reaction is 3-phosphoshikimate + phosphoenolpyruvate = 5-O-(1-carboxyvinyl)-3-phosphoshikimate + phosphate. The protein operates within metabolic intermediate biosynthesis; chorismate biosynthesis; chorismate from D-erythrose 4-phosphate and phosphoenolpyruvate: step 6/7. Functionally, catalyzes the transfer of the enolpyruvyl moiety of phosphoenolpyruvate (PEP) to the 5-hydroxyl of shikimate-3-phosphate (S3P) to produce enolpyruvyl shikimate-3-phosphate and inorganic phosphate. The sequence is that of 3-phosphoshikimate 1-carboxyvinyltransferase from Methylococcus capsulatus (strain ATCC 33009 / NCIMB 11132 / Bath).